The chain runs to 307 residues: Ornithine carbamoyltransferase (307 aa).

Carbamoyl phosphate contacts are provided by residues Ser-53–Thr-56, Gln-80, Arg-104, and His-131–Gln-134. L-ornithine is bound by residues Asn-162, Asp-220, and Ser-224–Met-225. Carbamoyl phosphate is bound by residues Cys-260 to Leu-261 and Arg-288.

The protein belongs to the aspartate/ornithine carbamoyltransferase superfamily. OTCase family.

It localises to the cytoplasm. The enzyme catalyses carbamoyl phosphate + L-ornithine = L-citrulline + phosphate + H(+). Its pathway is amino-acid biosynthesis; L-arginine biosynthesis; L-arginine from L-ornithine and carbamoyl phosphate: step 1/3. Reversibly catalyzes the transfer of the carbamoyl group from carbamoyl phosphate (CP) to the N(epsilon) atom of ornithine (ORN) to produce L-citrulline. The protein is Ornithine carbamoyltransferase of Nitrosomonas europaea (strain ATCC 19718 / CIP 103999 / KCTC 2705 / NBRC 14298).